The following is a 333-amino-acid chain: Threonine-phosphate decarboxylase (333 aa).

N6-(pyridoxal phosphate)lysine is present on K199.

This sequence belongs to the class-I pyridoxal-phosphate-dependent aminotransferase family. Homodimer. The cofactor is pyridoxal 5'-phosphate.

It localises to the cytoplasm. It catalyses the reaction O-phospho-L-threonine + H(+) = (R)-1-aminopropan-2-yl phosphate + CO2. It functions in the pathway cofactor biosynthesis; adenosylcobalamin biosynthesis. Functionally, decarboxylates L-threonine-O-3-phosphate to yield (R)-1-amino-2-propanol O-2-phosphate, the precursor for the linkage between the nucleotide loop and the corrin ring in cobalamin. This is Threonine-phosphate decarboxylase (cobC) from Sinorhizobium sp.